We begin with the raw amino-acid sequence, 493 residues long: Aminotransferase swnA (493 aa).

It belongs to the class-I pyridoxal-phosphate-dependent aminotransferase family. It depends on pyridoxal 5'-phosphate as a cofactor.

It participates in mycotoxin biosynthesis. Aminotransferase; part of the gene cluster that mediates the biosynthesis of swainsonine (SW), a cytotoxic fungal alkaloid and a potential cancer therapy drug. Swainsonine production occurs via a multibranched pathway and is dispensable for fungal colonization of plants and infection of insect hosts. The first step of swainsonine biosynthesis is the production of the precursor pipecolic acid (PA) via conversion of L-lysine (Lys) to 1-piperideine-6-carboxylate (P6C) by the aminotransferase swnA, the latter being further reduced to PA by the reductase swnR. The PKS-NRPS hybrid synthetase swnK uptakes and condensates PA and malonyl-CoA with and without skipping of the ketoreductase (KR) domain in order to produce 3 intermediates, 1-oxoindolizidine, (1S)-1-hydroxyindolizin, and (1R)-1-hydroxyindolizine; with the transisomer (1S)-1-hydroxyindolizin being predominant. The terminal thioester reductase (TE) domain of swnK is involved in reduction of the thioester bond to release the intermediate aldehydes. The oxidoreductase swnN could contribute to the reduction of 1-oxoindolizidine to (1S)-1-hydroxyindolizin and (1R)-1-hydroxyindolizine, contributing to the major route of SW production. The dioxygenase swnH2 would be responsible for the oxidization of (1R)-1-hydroxyindolizine into (1R,2S)-1,2-dihydroxyindolizine and of (1S)-1-hydroxyindolizin to yield both (1R,2S)-1,2-dihydroxyindolizine and (1S,2S)-1,2-dihydroxyindolizine. The dioxygenase swnH1 then performs the conversion of the 1,2-dihydroxyindolizine epimers to SW. The chain is Aminotransferase swnA from Arthroderma benhamiae (strain ATCC MYA-4681 / CBS 112371) (Trichophyton mentagrophytes).